Consider the following 483-residue polypeptide: Protein nucleotidyltransferase YdiU (483 aa).

ATP-binding residues include G81, G83, R84, K103, D115, G116, R166, and R173. Catalysis depends on D244, which acts as the Proton acceptor. Mg(2+) is bound by residues N245 and D254. D254 contacts ATP.

The protein belongs to the SELO family. It depends on Mg(2+) as a cofactor. Requires Mn(2+) as cofactor.

It carries out the reaction L-seryl-[protein] + ATP = 3-O-(5'-adenylyl)-L-seryl-[protein] + diphosphate. The enzyme catalyses L-threonyl-[protein] + ATP = 3-O-(5'-adenylyl)-L-threonyl-[protein] + diphosphate. The catalysed reaction is L-tyrosyl-[protein] + ATP = O-(5'-adenylyl)-L-tyrosyl-[protein] + diphosphate. It catalyses the reaction L-histidyl-[protein] + UTP = N(tele)-(5'-uridylyl)-L-histidyl-[protein] + diphosphate. It carries out the reaction L-seryl-[protein] + UTP = O-(5'-uridylyl)-L-seryl-[protein] + diphosphate. The enzyme catalyses L-tyrosyl-[protein] + UTP = O-(5'-uridylyl)-L-tyrosyl-[protein] + diphosphate. In terms of biological role, nucleotidyltransferase involved in the post-translational modification of proteins. It can catalyze the addition of adenosine monophosphate (AMP) or uridine monophosphate (UMP) to a protein, resulting in modifications known as AMPylation and UMPylation. The chain is Protein nucleotidyltransferase YdiU from Shewanella halifaxensis (strain HAW-EB4).